A 178-amino-acid chain; its full sequence is Mediator of RNA polymerase II transcription subunit 31 (178 aa).

The span at 129–140 shows a compositional bias: acidic residues; sequence EGQELEESEDEA. The segment at 129–178 is disordered; sequence EGQELEESEDEADIRQKDTEDEDDEETMKKPDADTAEKNSTTSTVSKKEK. The span at 155–165 shows a compositional bias: basic and acidic residues; that stretch reads TMKKPDADTAE. The span at 166 to 178 shows a compositional bias: polar residues; the sequence is KNSTTSTVSKKEK.

It belongs to the Mediator complex subunit 31 family. As to quaternary structure, component of the Mediator complex.

It is found in the nucleus. Functionally, component of the Mediator complex, a coactivator involved in the regulated transcription of nearly all RNA polymerase II-dependent genes. Mediator functions as a bridge to convey information from gene-specific regulatory proteins to the basal RNA polymerase II transcription machinery. Mediator is recruited to promoters by direct interactions with regulatory proteins and serves as a scaffold for the assembly of a functional preinitiation complex with RNA polymerase II and the general transcription factors. The sequence is that of Mediator of RNA polymerase II transcription subunit 31 from Caenorhabditis elegans.